The primary structure comprises 924 residues: Lon protease homolog 3, mitochondrial (924 aa).

The transit peptide at 1–63 directs the protein to the mitochondrion; that stretch reads MMPKRFNTSG…PVQSLLLFRA (63 aa). Residues 112–325 enclose the Lon N-terminal domain; that stretch reads VIALPLPHKP…LTLELVKKQV (214 aa). 447–454 contacts ATP; that stretch reads GPPGVGKT. The Lon proteolytic domain occupies 738–922; the sequence is QTPVGVVMGL…EKIFDLAFNY (185 aa). Active-site residues include Ser828 and Lys871.

The protein belongs to the peptidase S16 family. In terms of assembly, homohexamer or homoheptamer. Organized in a ring with a central cavity.

Its subcellular location is the mitochondrion matrix. It carries out the reaction Hydrolysis of proteins in presence of ATP.. In terms of biological role, ATP-dependent serine protease that mediates the selective degradation of misfolded, unassembled or oxidatively damaged polypeptides as well as certain short-lived regulatory proteins in the mitochondrial matrix. May also have a chaperone function in the assembly of inner membrane protein complexes. Participates in the regulation of mitochondrial gene expression and in the maintenance of the integrity of the mitochondrial genome. Binds to mitochondrial DNA in a site-specific manner. This chain is Lon protease homolog 3, mitochondrial (LON3), found in Arabidopsis thaliana (Mouse-ear cress).